We begin with the raw amino-acid sequence, 264 residues long: 3-methyl-2-oxobutanoate hydroxymethyltransferase (264 aa).

Positions 45 and 84 each coordinate Mg(2+). 3-methyl-2-oxobutanoate-binding positions include 45–46, Asp-84, and Lys-112; that span reads DS. Mg(2+) is bound at residue Glu-114. Glu-181 (proton acceptor) is an active-site residue.

This sequence belongs to the PanB family. Homodecamer; pentamer of dimers. Mg(2+) serves as cofactor.

It is found in the cytoplasm. It carries out the reaction 3-methyl-2-oxobutanoate + (6R)-5,10-methylene-5,6,7,8-tetrahydrofolate + H2O = 2-dehydropantoate + (6S)-5,6,7,8-tetrahydrofolate. Its pathway is cofactor biosynthesis; (R)-pantothenate biosynthesis; (R)-pantoate from 3-methyl-2-oxobutanoate: step 1/2. Its function is as follows. Catalyzes the reversible reaction in which hydroxymethyl group from 5,10-methylenetetrahydrofolate is transferred onto alpha-ketoisovalerate to form ketopantoate. The chain is 3-methyl-2-oxobutanoate hydroxymethyltransferase from Escherichia coli (strain K12 / MC4100 / BW2952).